The primary structure comprises 524 residues: Adhesion G-protein coupled receptor G5 (524 aa).

An N-terminal signal peptide occupies residues 1–23 (MDPHGALFFYLCLLAAQVVLVET). The Extracellular segment spans residues 24 to 246 (LSDLLVLMKR…PAELQVPLEY (223 aa)). N-linked (GlcNAc...) asparagine glycans are attached at residues asparagine 58, asparagine 65, asparagine 96, asparagine 143, asparagine 169, and asparagine 175. The GAIN-B domain maps to 74–235 (QSLVFKLSCD…AVLMQLSGDP (162 aa)). 2 disulfide bridges follow: cysteine 185–cysteine 217 and cysteine 205–cysteine 219. The segment at 185–235 (CVFWKEGASKSSWGAWSPEGCYTEQPSATQVLCHCNHLTYFAVLMQLSGDP) is GPS. A stachel region spans residues 224 to 232 (YFAVLMQLS). A helical transmembrane segment spans residues 247–267 (ISFVGCSISIVASLLTILLYA). Residues 268–284 (QSRKQSDSTTRIHMNLN) lie on the Cytoplasmic side of the membrane. A helical transmembrane segment spans residues 285–305 (GSVLLLNVTFLLSSQMTLPTM). Residues 306-319 (PRPVCKVLAAVLHY) lie on the Extracellular side of the membrane. Residues cysteine 310 and cysteine 400 are joined by a disulfide bond. Residues 320 to 340 (ALLSSLTWMAIEGFNLYLFLG) form a helical membrane-spanning segment. Residues 341-351 (RVYNAYIRRYL) are Cytoplasmic-facing. A helical membrane pass occupies residues 352–372 (LKLCMLGWGFPALLVLLLLMI). Residues 373-413 (KSSVYGPCVTSLSKSQENGTGFQNVSMCWIRSPMVHSILVM) lie on the Extracellular side of the membrane. N-linked (GlcNAc...) asparagine glycans are attached at residues asparagine 390 and asparagine 396. The helical transmembrane segment at 414-434 (GYGGFTSLFNLVVLAWALWIL) threads the bilayer. Residues 435–453 (CRLRAREKALSPWAYRDTA) are Cytoplasmic-facing. The chain crosses the membrane as a helical span at residues 454–476 (MVLGLTVLLGTTWTLAFFSFGVF). Residues 477–480 (LLPQ) are Extracellular-facing. A helical membrane pass occupies residues 481 to 500 (LFLFTIFNSLYGFFLFLWFC). The Cytoplasmic portion of the chain corresponds to 501–524 (SQKRYSDAEAKAEMEAVSSSQMTH).

It belongs to the G-protein coupled receptor 2 family. Adhesion G-protein coupled receptor (ADGR) subfamily. As to quaternary structure, heterodimer of 2 chains generated by proteolytic processing; the large extracellular N-terminal fragment and the membrane-bound C-terminal fragment predominantly remain associated and non-covalently linked. Post-translationally, autoproteolytically processed at the GPS region of the GAIN-B domain; this cleavage modulates receptor activity. Expressed at least in kidney, heart, brain and spleen. As to expression, isoform 1 is predominant in spleen. In the kidney, both isoform 1 and isoform 2 are expressed at similar levels. In terms of tissue distribution, isoform 2 is the major form in heart and brain. In the kidney, both isoform 1 and isoform 2 are expressed at similar levels.

It is found in the cell membrane. Its activity is regulated as follows. Forms a heterodimer of 2 chains generated by proteolytic processing that remain associated through non-covalent interactions mediated by the GAIN-B domain. In the inactivated receptor, the Stachel sequence (also named stalk) is embedded in the GAIN-B domain, where it adopts a beta-strand conformation. On activation, the Stachel moves into the 7 transmembrane region and adopts a twisted hook-shaped configuration that forms contacts within the receptor, leading to coupling of a G-alpha protein, which activates signaling. The cleaved GAIN-B and N-terminal domains can then dissociate from the rest of the receptor. In terms of biological role, orphan adhesion G-protein coupled receptor (aGPCR). Ligand binding causes a conformation change that triggers signaling via guanine nucleotide-binding proteins (G proteins) and modulates the activity of downstream effectors, such as adenylate cyclase. ADGRG5 is specifically coupled to G(s) G proteins and mediates activation of adenylate cyclase activity. Isoform 1, but not isoform 2, is constitutively active, as evidenced by elevated basal cAMP levels, and responds to mechanical activation (shaking). The polypeptide is Adhesion G-protein coupled receptor G5 (Mus musculus (Mouse)).